Reading from the N-terminus, the 151-residue chain is Probable cGMP 3',5'-cyclic phosphodiesterase subunit delta (151 aa).

It belongs to the PDE6D/unc-119 family. Interacts with Pde6.

It is found in the nucleus. Its subcellular location is the cytoplasm. The polypeptide is Probable cGMP 3',5'-cyclic phosphodiesterase subunit delta (Drosophila persimilis (Fruit fly)).